A 438-amino-acid chain; its full sequence is DNA polymerase IV 1 (438 aa).

One can recognise a UmuC domain in the interval 46 to 226; it reads LAHIDCDAFY…KPVTMIWGVG (181 aa). Residues D50 and D143 each contribute to the Mg(2+) site. E144 is an active-site residue.

The protein belongs to the DNA polymerase type-Y family. In terms of assembly, monomer. It depends on Mg(2+) as a cofactor.

The protein resides in the cytoplasm. It catalyses the reaction DNA(n) + a 2'-deoxyribonucleoside 5'-triphosphate = DNA(n+1) + diphosphate. Functionally, poorly processive, error-prone DNA polymerase involved in untargeted mutagenesis. Copies undamaged DNA at stalled replication forks, which arise in vivo from mismatched or misaligned primer ends. These misaligned primers can be extended by PolIV. Exhibits no 3'-5' exonuclease (proofreading) activity. May be involved in translesional synthesis, in conjunction with the beta clamp from PolIII. This Mesorhizobium japonicum (strain LMG 29417 / CECT 9101 / MAFF 303099) (Mesorhizobium loti (strain MAFF 303099)) protein is DNA polymerase IV 1 (dinB1).